A 163-amino-acid chain; its full sequence is Odorant-binding protein 1a (163 aa).

The N-terminal stretch at 1–16 is a signal peptide; sequence MAKFLLLALTFGLAHA. Intrachain disulfides connect Cys50–Cys54 and Cys69–Cys161.

This sequence belongs to the calycin superfamily. Lipocalin family. May form a heterodimer with OBP1B. In terms of processing, the N-terminus may be blocked. Expressed in nasal mucosa (at protein level). Specifically detected in septal and lateral nasal glands.

The protein resides in the secreted. Binds the chemical odorant 2-isobutyl-3-methoxypyrazine. The sequence is that of Odorant-binding protein 1a from Mus musculus (Mouse).